Consider the following 317-residue polypeptide: Transaldolase (317 aa).

Lys132 acts as the Schiff-base intermediate with substrate in catalysis.

This sequence belongs to the transaldolase family. Type 1 subfamily. In terms of assembly, homodimer.

It localises to the cytoplasm. It catalyses the reaction D-sedoheptulose 7-phosphate + D-glyceraldehyde 3-phosphate = D-erythrose 4-phosphate + beta-D-fructose 6-phosphate. It participates in carbohydrate degradation; pentose phosphate pathway; D-glyceraldehyde 3-phosphate and beta-D-fructose 6-phosphate from D-ribose 5-phosphate and D-xylulose 5-phosphate (non-oxidative stage): step 2/3. Functionally, transaldolase is important for the balance of metabolites in the pentose-phosphate pathway. The sequence is that of Transaldolase from Yersinia enterocolitica serotype O:8 / biotype 1B (strain NCTC 13174 / 8081).